Here is a 231-residue protein sequence, read N- to C-terminus: Large ribosomal subunit protein uL1 (231 aa).

The protein belongs to the universal ribosomal protein uL1 family. Part of the 50S ribosomal subunit.

Its function is as follows. Binds directly to 23S rRNA. The L1 stalk is quite mobile in the ribosome, and is involved in E site tRNA release. Protein L1 is also a translational repressor protein, it controls the translation of the L11 operon by binding to its mRNA. The protein is Large ribosomal subunit protein uL1 of Thioalkalivibrio sulfidiphilus (strain HL-EbGR7).